The chain runs to 463 residues: Probable ECA polymerase (463 aa).

11 helical membrane-spanning segments follow: residues 6–26 (FGGL…LTWM), 39–59 (FSLL…VLVF), 65–85 (VVPV…YAVY), 112–132 (ANLT…IFFL), 154–174 (GVAL…VYFL), 180–200 (AWLL…VIVG), 201–221 (GTRA…IVRG), 222–242 (WITL…MFWL), 340–360 (LVVM…GLVI), 377–397 (YKAA…IVLT), and 408–428 (VVFF…LYWL).

Belongs to the WzyE family. As to quaternary structure, probably part of a complex composed of WzxE, WzyE and WzzE.

The protein resides in the cell inner membrane. It participates in bacterial outer membrane biogenesis; enterobacterial common antigen biosynthesis. Its function is as follows. Probably involved in the polymerization of enterobacterial common antigen (ECA) trisaccharide repeat units. In Pectobacterium atrosepticum (strain SCRI 1043 / ATCC BAA-672) (Erwinia carotovora subsp. atroseptica), this protein is Probable ECA polymerase.